We begin with the raw amino-acid sequence, 128 residues long: MELMKLEIVTPNGVIFDDDVKQVTLPGSEGEFGVLPKHATLVSLLDTGVIVIEKADGSEVAVAINSGYVKVDEEKTTCIVDGAVALSGEDSDLAKALEEAKELIKKAESSSVAIASAVSKVEQIGKSF.

Belongs to the ATPase epsilon chain family. F-type ATPases have 2 components, CF(1) - the catalytic core - and CF(0) - the membrane proton channel. CF(1) has five subunits: alpha(3), beta(3), gamma(1), delta(1), epsilon(1). CF(0) has three main subunits: a, b and c.

It is found in the cell inner membrane. Functionally, produces ATP from ADP in the presence of a proton gradient across the membrane. This Sulfurovum sp. (strain NBC37-1) protein is ATP synthase epsilon chain.